Reading from the N-terminus, the 1291-residue chain is Tat-binding homolog 7 (1291 aa).

The interval 1–345 (MPRSDGFSPR…HNRGERERGR (345 aa)) is disordered. A compositionally biased stretch (basic and acidic residues) spans 64–82 (RYYEEEYHEAISSEEDERR). Residues 88-99 (SSNSMTYRQQVM) are compositionally biased toward polar residues. Residues 226 to 257 (EEEEEGAEEDEQSGEKDPEEEEDDSSNAESSE) are compositionally biased toward acidic residues. Basic residues predominate over residues 298–311 (NRHHRNRNGSRRRR). 432–439 (GPPGTGKT) contributes to the ATP binding site. Residues 914 to 1022 (ALQRQMRLFF…DAIDDLIECE (109 aa)) form the Bromo domain. The segment at 1110–1194 (KSEEGTSTST…MKDASKDSTP (85 aa)) is disordered. The span at 1128 to 1142 (NKKKLLKKKKGQKKS) shows a compositional bias: basic residues. Acidic residues predominate over residues 1148-1164 (EEHDEDSTVEDAGEDTI). Positions 1168–1190 (LEIKKNQETPNSEHDIEMKDASK) are enriched in basic and acidic residues.

The protein belongs to the AAA ATPase family.

Functionally, thought to form a complex that enhances transcription from repetitive DNA sequences by modulating chromatin structure. The chain is Tat-binding homolog 7 (lex-1) from Caenorhabditis elegans.